A 130-amino-acid chain; its full sequence is Ribosome-binding factor A (130 aa).

It belongs to the RbfA family. In terms of assembly, monomer. Binds 30S ribosomal subunits, but not 50S ribosomal subunits or 70S ribosomes.

It localises to the cytoplasm. Functionally, one of several proteins that assist in the late maturation steps of the functional core of the 30S ribosomal subunit. Associates with free 30S ribosomal subunits (but not with 30S subunits that are part of 70S ribosomes or polysomes). Required for efficient processing of 16S rRNA. May interact with the 5'-terminal helix region of 16S rRNA. In Roseiflexus sp. (strain RS-1), this protein is Ribosome-binding factor A.